The following is a 443-amino-acid chain: Probable D-serine dehydratase (443 aa).

The residue at position 118 (lysine 118) is an N6-(pyridoxal phosphate)lysine.

This sequence belongs to the serine/threonine dehydratase family. DsdA subfamily. The cofactor is pyridoxal 5'-phosphate.

The catalysed reaction is D-serine = pyruvate + NH4(+). This is Probable D-serine dehydratase from Colwellia psychrerythraea (strain 34H / ATCC BAA-681) (Vibrio psychroerythus).